A 370-amino-acid chain; its full sequence is Ribosomal RNA small subunit methyltransferase H (370 aa).

Residues 85–87 (GGH), D104, Y131, D152, and Q159 contribute to the S-adenosyl-L-methionine site. Composition is skewed to basic and acidic residues over residues 332-345 (GAERATPEEIERNP) and 353-370 (RALEKVAGRPTTARRDAR). Residues 332-370 (GAERATPEEIERNPRSAPVRLRALEKVAGRPTTARRDAR) are disordered.

This sequence belongs to the methyltransferase superfamily. RsmH family.

It localises to the cytoplasm. It catalyses the reaction cytidine(1402) in 16S rRNA + S-adenosyl-L-methionine = N(4)-methylcytidine(1402) in 16S rRNA + S-adenosyl-L-homocysteine + H(+). Specifically methylates the N4 position of cytidine in position 1402 (C1402) of 16S rRNA. This is Ribosomal RNA small subunit methyltransferase H from Mycobacterium sp. (strain KMS).